Here is a 310-residue protein sequence, read N- to C-terminus: tRNA dimethylallyltransferase (310 aa).

Residue 13 to 20 coordinates ATP; that stretch reads GPTASGKT. 15-20 lines the substrate pocket; the sequence is TASGKT. Interaction with substrate tRNA regions lie at residues 38 to 41, 162 to 166, 243 to 248, and 276 to 283; these read DSAL, QRLSR, RCVGYR, and KRQITWLR.

Belongs to the IPP transferase family. In terms of assembly, monomer. It depends on Mg(2+) as a cofactor.

The enzyme catalyses adenosine(37) in tRNA + dimethylallyl diphosphate = N(6)-dimethylallyladenosine(37) in tRNA + diphosphate. Functionally, catalyzes the transfer of a dimethylallyl group onto the adenine at position 37 in tRNAs that read codons beginning with uridine, leading to the formation of N6-(dimethylallyl)adenosine (i(6)A). In Vibrio atlanticus (strain LGP32) (Vibrio splendidus (strain Mel32)), this protein is tRNA dimethylallyltransferase.